The primary structure comprises 648 residues: Wilms tumor protein 1-interacting protein homolog (648 aa).

3 disordered regions span residues 27–56 (DGMYGEPNPDMEKTKRMNGSSSTPGNKVYS), 142–291 (SNSL…SPRS), and 306–327 (SPRSSISSHSSRSSRSSRGSMS). Composition is skewed to low complexity over residues 158–171 (SPRSSLASSHSSQD) and 178–192 (PRSSISSPRSSLVSP). Composition is skewed to polar residues over residues 197-213 (GTSVISPRSSYASTASD) and 220-241 (PRTSLNSYDCGSKPSSNRTSGI). Low complexity predominate over residues 252–267 (PRSSTTSPRSSYSDSR). 3 LIM zinc-binding domains span residues 437–498 (GICV…SGFQ), 502–561 (EKCF…TVFA), and 562–631 (PKCA…RLKT).

This sequence belongs to the zyxin/ajuba family.

The protein localises to the cell junction. Its subcellular location is the adherens junction. It localises to the nucleus. Its function is as follows. May monitor slit diaphragm protein assembly, a specialized adherens junction characteristic of podocytes. In case of podocyte injury, it shuttles into the nucleus and acts as a transcription regulator. Plays a role in the regulation of cell morphology and cytoskeletal organization. Acts as a transcriptional corepressor for snai1 and snai2/slug and plays a role in regulating neural crest development. This is Wilms tumor protein 1-interacting protein homolog (wtip) from Danio rerio (Zebrafish).